A 177-amino-acid polypeptide reads, in one-letter code: ATP synthase subunit delta (177 aa).

This sequence belongs to the ATPase delta chain family. In terms of assembly, F-type ATPases have 2 components, F(1) - the catalytic core - and F(0) - the membrane proton channel. F(1) has five subunits: alpha(3), beta(3), gamma(1), delta(1), epsilon(1). F(0) has three main subunits: a(1), b(2) and c(10-14). The alpha and beta chains form an alternating ring which encloses part of the gamma chain. F(1) is attached to F(0) by a central stalk formed by the gamma and epsilon chains, while a peripheral stalk is formed by the delta and b chains.

It localises to the cell inner membrane. In terms of biological role, f(1)F(0) ATP synthase produces ATP from ADP in the presence of a proton or sodium gradient. F-type ATPases consist of two structural domains, F(1) containing the extramembraneous catalytic core and F(0) containing the membrane proton channel, linked together by a central stalk and a peripheral stalk. During catalysis, ATP synthesis in the catalytic domain of F(1) is coupled via a rotary mechanism of the central stalk subunits to proton translocation. This protein is part of the stalk that links CF(0) to CF(1). It either transmits conformational changes from CF(0) to CF(1) or is implicated in proton conduction. The protein is ATP synthase subunit delta of Shigella flexneri.